The following is a 140-amino-acid chain: Neuropeptide CCHamide-2 (140 aa).

An N-terminal signal peptide occupies residues 1-22 (MAQMYLAVTIIALLAISHGVSA). Cysteine 26 and cysteine 33 are oxidised to a cystine. Histidine amide is present on histidine 37. The propeptide occupies 41–140 (SGDTSAMDQL…PDDGYYIESL (100 aa)).

Expressed in corpora cardiaca (CC), corpora allata (CA), antennal lobe (AL) and gnathal ganglion (GNG) (at protein level). Expression detected in few animals (at protein level).

It localises to the secreted. Functionally, ligand for the CCHamide-2 receptor CCHa2-R. This is Neuropeptide CCHamide-2 from Agrotis ipsilon (Black cutworm moth).